The following is a 207-amino-acid chain: Probable GTP-binding protein EngB (207 aa).

The EngB-type G domain occupies 22-194 (DLPEVAFAGR…LQRLDVALSD (173 aa)). GTP contacts are provided by residues 30 to 37 (GRSNVGKS), 57 to 61 (GRTQL), 75 to 78 (DLPG), 142 to 145 (TKVD), and 173 to 175 (FSA). Residues Ser-37 and Thr-59 each contribute to the Mg(2+) site.

The protein belongs to the TRAFAC class TrmE-Era-EngA-EngB-Septin-like GTPase superfamily. EngB GTPase family. It depends on Mg(2+) as a cofactor.

In terms of biological role, necessary for normal cell division and for the maintenance of normal septation. In Syntrophotalea carbinolica (strain DSM 2380 / NBRC 103641 / GraBd1) (Pelobacter carbinolicus), this protein is Probable GTP-binding protein EngB.